A 304-amino-acid chain; its full sequence is Xylanase inhibitor protein 1 (304 aa).

A signal peptide spans 1–30 (MAPLAARRPACLLALLSVAAALFLTPTALA). A GH18 domain is found at 36–304 (GQVTVFWGRN…NYSSLIKYYA (269 aa)). An intrachain disulfide couples Cys-55 to Cys-96. Asn-119 carries N-linked (GlcNAc...) asparagine glycosylation. The Proton donor role is filled by Glu-158. The tract at residues 178 to 184 (IRGGPGK) is interaction with fungal GH11 xylanase. Cysteines 194 and 225 form a disulfide. An interaction with fungal GH10 xylanase region spans residues 262 to 275 (HPKNVYYGVAPVAQ). A glycan (N-linked (GlcNAc...) asparagine) is linked at Asn-295.

The protein belongs to the glycosyl hydrolase 18 family. Xylanase inhibitor subfamily. Binds to fungal GH10 and GH11 xylanases. Also forms a ternary complex with barley alpha-amylase 1 (AMY1) and insoluble starch.

It localises to the secreted. Functionally, fungal xylanase inhibitor. Possesses competitive inhibiting activity against fungal endo-1,4-beta-D-xylanases belonging to glycoside hydrolase family 10 (GH10) and family 11 (GH11). Possesses also inhibitory activity towards barley alpha-amylases. Binding to xylanases or amylases is necessary for inhibition activity. May function in plant defense against secreted fungal pathogen xylanases. Is similar to class III chitinases, but does not exhibit chitinase activity. This is Xylanase inhibitor protein 1 from Triticum aestivum (Wheat).